The primary structure comprises 311 residues: Methionyl-tRNA formyltransferase (311 aa).

110–113 provides a ligand contact to (6S)-5,6,7,8-tetrahydrofolate; that stretch reads SLLP.

It belongs to the Fmt family.

It carries out the reaction L-methionyl-tRNA(fMet) + (6R)-10-formyltetrahydrofolate = N-formyl-L-methionyl-tRNA(fMet) + (6S)-5,6,7,8-tetrahydrofolate + H(+). Functionally, attaches a formyl group to the free amino group of methionyl-tRNA(fMet). The formyl group appears to play a dual role in the initiator identity of N-formylmethionyl-tRNA by promoting its recognition by IF2 and preventing the misappropriation of this tRNA by the elongation apparatus. This chain is Methionyl-tRNA formyltransferase, found in Streptococcus equi subsp. zooepidemicus (strain H70).